The chain runs to 216 residues: Cytidylate kinase (216 aa).

7 to 15 (GPAASGKGT) lines the ATP pocket.

This sequence belongs to the cytidylate kinase family. Type 1 subfamily.

Its subcellular location is the cytoplasm. It carries out the reaction CMP + ATP = CDP + ADP. The catalysed reaction is dCMP + ATP = dCDP + ADP. The sequence is that of Cytidylate kinase from Methylocella silvestris (strain DSM 15510 / CIP 108128 / LMG 27833 / NCIMB 13906 / BL2).